A 456-amino-acid chain; its full sequence is Chromosomal replication initiator protein DnaA (456 aa).

Residues 1–79 form a domain I, interacts with DnaA modulators region; sequence MSQEIWADVL…QHPQVSFQVL (79 aa). The tract at residues 79–112 is domain II; sequence LPASQDALLLPSDPPPAPISPGRAPAPPPADNRK. The tract at residues 89–112 is disordered; it reads PSDPPPAPISPGRAPAPPPADNRK. Pro residues predominate over residues 90 to 108; the sequence is SDPPPAPISPGRAPAPPPA. A domain III, AAA+ region region spans residues 113–329; the sequence is TLNPKYTFEN…GALMRVVAFS (217 aa). Residues Gly157, Gly159, Lys160, and Thr161 each coordinate ATP. A domain IV, binds dsDNA region spans residues 330–456; it reads SLNNVPFSRA…KGLEDEDSRA (127 aa).

Belongs to the DnaA family. Oligomerizes as a right-handed, spiral filament on DNA at oriC.

The protein localises to the cytoplasm. Plays an essential role in the initiation and regulation of chromosomal replication. ATP-DnaA binds to the origin of replication (oriC) to initiate formation of the DNA replication initiation complex once per cell cycle. Binds the DnaA box (a 9 base pair repeat at the origin) and separates the double-stranded (ds)DNA. Forms a right-handed helical filament on oriC DNA; dsDNA binds to the exterior of the filament while single-stranded (ss)DNA is stabiized in the filament's interior. The ATP-DnaA-oriC complex binds and stabilizes one strand of the AT-rich DNA unwinding element (DUE), permitting loading of DNA polymerase. After initiation quickly degrades to an ADP-DnaA complex that is not apt for DNA replication. Binds acidic phospholipids. The polypeptide is Chromosomal replication initiator protein DnaA (Deinococcus deserti (strain DSM 17065 / CIP 109153 / LMG 22923 / VCD115)).